A 104-amino-acid polypeptide reads, in one-letter code: MTASTEGQARYGQSVKGLLTEKVSTCGADVIALTKQVLKGSHSSELLGQAARNMVMQEDSILHSEDSLRKMAIITTHLQYQQEAIQKNVEQSSNLQDQLKHLLK.

This sequence belongs to the BORCS7 family.

The protein resides in the lysosome membrane. Its function is as follows. As part of a BORC-like complex may play a role in lysosomes movement and localization at the cell periphery. Associated with the cytosolic face of lysosomes, this complex may couple lysosomes to microtubule plus-end-directed kinesin motor. The sequence is that of BLOC-1-related complex subunit 7 from Xenopus tropicalis (Western clawed frog).